The following is a 370-amino-acid chain: Pituitary-specific positive transcription factor 1 (370 aa).

The short motif at 5 to 13 (AFASSDNFV) is the 9aaTAD element. One can recognise a POU-specific domain in the interval 202 to 276 (MDSPEIRELE…ILSKWLEEAE (75 aa)). Positions 292 to 351 (KRKRRTTISIAAKEALERHFGEQSKPSSQEIMRMAEGLNLEKEVVRVWFCNRRQREKRVK) form a DNA-binding region, homeobox.

The protein belongs to the POU transcription factor family. Class-1 subfamily. In terms of tissue distribution, pituitary gland.

The protein localises to the nucleus. Its function is as follows. Transcription factor that activates growth hormone and prolactin genes. Specifically binds to the consensus sequence 5'-TAAAT-3'. This is Pituitary-specific positive transcription factor 1 (POU1F1) from Meleagris gallopavo (Wild turkey).